The following is a 494-amino-acid chain: GPI alpha-1,6-mannosyltransferase 2 (494 aa).

Topologically, residues 1 to 13 (MWSLDPSQKEVLR) are cytoplasmic. A helical membrane pass occupies residues 14-34 (FAVSCRILTLMLQALFNIIIP). At 35 to 77 (DHHADAFSPPRLASSCSVDQLVEGLLGGLSRWDAEHFLFIAEH) the chain is on the lumenal side. Residues 78–98 (GYLYEHNFAFFPGFPLALLMG) form a helical membrane-spanning segment. The Cytoplasmic portion of the chain corresponds to 99–113 (TELLRPLQGLLSQRS). Residues 114 to 134 (CLLVSVALLNFLFSVLAAVTL) form a helical membrane-spanning segment. At 135 to 136 (HD) the chain is on the lumenal side. A helical membrane pass occupies residues 137-157 (LGCLVLGCPRQAFYAAMLFCL). Residues 158 to 161 (SPAN) lie on the Cytoplasmic side of the membrane. The chain crosses the membrane as a helical span at residues 162–182 (VFLAAGYSEALFAFLTFSAMG). Over 183-192 (QLERGRSWAS) the chain is Lumenal. Residues 193–213 (GLLFALATGVRSNGLVSVGFL) traverse the membrane as a helical segment. Over 214–234 (LHAQCRGFFSSLVVLNPLKPL) the chain is Cytoplasmic. A helical membrane pass occupies residues 235 to 255 (FKLMASLCLSVLTVSLPFALF). Over 256–327 (QYYAYTQFCL…RYYELRQVPN (72 aa)) the chain is Lumenal. A helical transmembrane segment spans residues 328–348 (FLLATPVAVLVVWAAWTYVTT). The Cytoplasmic portion of the chain corresponds to 349–379 (HPWLCLTLGLRRSKDSKKTLEKPHPGFLSPK). Residues 380–400 (VFVYLVHAAGLLLFGSLCMHV) traverse the membrane as a helical segment. Over 401–470 (QVLTRLLCSS…NWRACSPVTR (70 aa)) the chain is Lumenal. A helical membrane pass occupies residues 471–491 (CILGYFLTYWLLGLLLHCNFL). Over 492 to 494 (PWT) the chain is Cytoplasmic.

The protein belongs to the PIGV family. Post-translationally, not N-glycosylated.

It is found in the endoplasmic reticulum membrane. The protein operates within glycolipid biosynthesis; glycosylphosphatidylinositol-anchor biosynthesis. Alpha-1,6-mannosyltransferase that catalyzes the transfer of the second mannose, via an alpha-1,6 bond, from a dolichol-phosphate-mannose (Dol-P-Man) to the alpha-D-Man-(1-&gt;4)-alpha-D-GlcN-(1-&gt;6)-(1-radyl,2-acyl-sn-glycero-3-phospho)-2-acyl-inositol intermediate to generate an alpha-D-Man-(1-&gt;6)-alpha-D-Man-(1-&gt;4)-alpha-D-GlcN-(1-&gt;6)-(1-radyl,2-acyl-sn-glycero-3-phospho)-2-acyl-inositol and participates in the seventh step of the glycosylphosphatidylinositol-anchor biosynthesis. Also transfers the second mannose on a 2-PEtn-alpha-D-Man-(1-&gt;4)-alpha-D-GlcN-(1-&gt;6)-(1-radyl,2-acyl-sn-glycero-3-phospho)-2-acyl-inositol. The protein is GPI alpha-1,6-mannosyltransferase 2 of Cricetulus griseus (Chinese hamster).